The following is an 85-amino-acid chain: uncharacterized protein (85 aa).

This is an uncharacterized protein from Enterobacteria phage T3 (Bacteriophage T3).